Reading from the N-terminus, the 274-residue chain is 4-hydroxy-3-methylbut-2-enyl diphosphate reductase (274 aa).

Cys12 contributes to the [4Fe-4S] cluster binding site. (2E)-4-hydroxy-3-methylbut-2-enyl diphosphate is bound by residues His36 and His70. 2 residues coordinate dimethylallyl diphosphate: His36 and His70. 2 residues coordinate isopentenyl diphosphate: His36 and His70. [4Fe-4S] cluster is bound at residue Cys92. His120 contributes to the (2E)-4-hydroxy-3-methylbut-2-enyl diphosphate binding site. His120 contributes to the dimethylallyl diphosphate binding site. His120 contributes to the isopentenyl diphosphate binding site. Glu122 functions as the Proton donor in the catalytic mechanism. Residue Thr158 coordinates (2E)-4-hydroxy-3-methylbut-2-enyl diphosphate. Cys186 is a binding site for [4Fe-4S] cluster. Residues Ser214, Ser215, Asn216, and Ser258 each coordinate (2E)-4-hydroxy-3-methylbut-2-enyl diphosphate. Residues Ser214, Ser215, Asn216, and Ser258 each contribute to the dimethylallyl diphosphate site. 4 residues coordinate isopentenyl diphosphate: Ser214, Ser215, Asn216, and Ser258.

It belongs to the IspH family. It depends on [4Fe-4S] cluster as a cofactor.

The catalysed reaction is isopentenyl diphosphate + 2 oxidized [2Fe-2S]-[ferredoxin] + H2O = (2E)-4-hydroxy-3-methylbut-2-enyl diphosphate + 2 reduced [2Fe-2S]-[ferredoxin] + 2 H(+). The enzyme catalyses dimethylallyl diphosphate + 2 oxidized [2Fe-2S]-[ferredoxin] + H2O = (2E)-4-hydroxy-3-methylbut-2-enyl diphosphate + 2 reduced [2Fe-2S]-[ferredoxin] + 2 H(+). Its pathway is isoprenoid biosynthesis; dimethylallyl diphosphate biosynthesis; dimethylallyl diphosphate from (2E)-4-hydroxy-3-methylbutenyl diphosphate: step 1/1. It functions in the pathway isoprenoid biosynthesis; isopentenyl diphosphate biosynthesis via DXP pathway; isopentenyl diphosphate from 1-deoxy-D-xylulose 5-phosphate: step 6/6. In terms of biological role, catalyzes the conversion of 1-hydroxy-2-methyl-2-(E)-butenyl 4-diphosphate (HMBPP) into a mixture of isopentenyl diphosphate (IPP) and dimethylallyl diphosphate (DMAPP). Acts in the terminal step of the DOXP/MEP pathway for isoprenoid precursor biosynthesis. The chain is 4-hydroxy-3-methylbut-2-enyl diphosphate reductase from Helicobacter pylori (strain Shi470).